Consider the following 729-residue polypeptide: Polyphosphate kinase (729 aa).

The segment at 1 to 46 (MTEAQTRTEPSESSESSEAVAPAITSAADSAPEAPPATTAPAIENP) is disordered. Low complexity predominate over residues 25-42 (TSAADSAPEAPPATTAPA). Asn90 contributes to the ATP binding site. Mg(2+)-binding residues include Arg422 and Arg452. His482 functions as the Phosphohistidine intermediate in the catalytic mechanism. Tyr515, Arg611, and His639 together coordinate ATP.

It belongs to the polyphosphate kinase 1 (PPK1) family. The cofactor is Mg(2+). Post-translationally, an intermediate of this reaction is the autophosphorylated ppk in which a phosphate is covalently linked to a histidine residue through a N-P bond.

It catalyses the reaction [phosphate](n) + ATP = [phosphate](n+1) + ADP. Functionally, catalyzes the reversible transfer of the terminal phosphate of ATP to form a long-chain polyphosphate (polyP). This Mycolicibacterium gilvum (strain PYR-GCK) (Mycobacterium gilvum (strain PYR-GCK)) protein is Polyphosphate kinase.